The chain runs to 146 residues: Leghemoglobin Lb120-34 (146 aa).

In terms of domain architecture, Globin spans 2-146 (GFTEKQEALV…LASAIKKAMN (145 aa)). A nitrated tyrosine mark is found at Tyr-24 and Tyr-29. Ser-44 is a binding site for heme b. At Ser-44 the chain carries Phosphoserine. His-61 is a binding site for O2. Residues Lys-64, His-93, and Lys-96 each contribute to the heme b site. At Tyr-134 the chain carries Nitrated tyrosine.

The protein belongs to the plant globin family. As to quaternary structure, monomer. In terms of processing, nitrated in effective nodules and particularly in hypoxic conditions; this mechanism may play a protective role in the symbiosis by buffering toxic peroxynitrite NO(2)(-). Nitration level decrease during nodule senescence. Phosphorylation at Ser-44 disrupts the molecular environment of its porphyrin ring oxygen binding pocket, thus leading to a reduced oxygen consumption and to the delivery of oxygen O(2) to symbiosomes. As to expression, root nodules.

Its subcellular location is the cytoplasm. It is found in the cytosol. The protein localises to the nucleus. In terms of biological role, leghemoglobin that reversibly binds oxygen O(2) through a pentacoordinated heme iron. In root nodules, facilitates the diffusion of oxygen to the bacteroids while preventing the bacterial nitrogenase from being inactivated by buffering dioxygen, nitric oxide and carbon monoxide, and promoting the formation of reactive oxygen species (ROS, e.g. H(2)O(2)). This role is essential for symbiotic nitrogen fixation (SNF). In Pisum sativum (Garden pea), this protein is Leghemoglobin Lb120-34.